A 210-amino-acid chain; its full sequence is uncharacterized protein (210 aa).

The PfpI endopeptidase domain occupies Arg-4–Val-180. The Nucleophile role is filled by Cys-110.

It belongs to the peptidase C56 family.

This is an uncharacterized protein from Bacillus subtilis (strain 168).